A 142-amino-acid chain; its full sequence is Large ribosomal subunit protein bL17 (142 aa).

Belongs to the bacterial ribosomal protein bL17 family. In terms of assembly, part of the 50S ribosomal subunit. Contacts protein L32.

The polypeptide is Large ribosomal subunit protein bL17 (Wolbachia pipientis wMel).